Reading from the N-terminus, the 256-residue chain is Indole-3-glycerol phosphate synthase (256 aa).

This sequence belongs to the TrpC family.

It catalyses the reaction 1-(2-carboxyphenylamino)-1-deoxy-D-ribulose 5-phosphate + H(+) = (1S,2R)-1-C-(indol-3-yl)glycerol 3-phosphate + CO2 + H2O. It functions in the pathway amino-acid biosynthesis; L-tryptophan biosynthesis; L-tryptophan from chorismate: step 4/5. This is Indole-3-glycerol phosphate synthase from Caldanaerobacter subterraneus subsp. tengcongensis (strain DSM 15242 / JCM 11007 / NBRC 100824 / MB4) (Thermoanaerobacter tengcongensis).